The sequence spans 98 residues: uncharacterized protein (98 aa).

The next 2 membrane-spanning stretches (helical) occupy residues 13–33 (LFSL…IAIF) and 65–85 (IMVI…IFIS).

Its subcellular location is the membrane. This is an uncharacterized protein from Saccharomyces cerevisiae (strain ATCC 204508 / S288c) (Baker's yeast).